Consider the following 313-residue polypeptide: Ornithine carbamoyltransferase (313 aa).

Residues 61 to 64 (STRT), Gln-88, Arg-112, and 139 to 142 (HPCQ) contribute to the carbamoyl phosphate site. L-ornithine is bound by residues Asn-170, Asp-228, and 232–233 (SM). Residues 268-269 (CL) and Arg-296 each bind carbamoyl phosphate.

Belongs to the aspartate/ornithine carbamoyltransferase superfamily. OTCase family.

It is found in the cytoplasm. It catalyses the reaction carbamoyl phosphate + L-ornithine = L-citrulline + phosphate + H(+). The protein operates within amino-acid biosynthesis; L-arginine biosynthesis; L-arginine from L-ornithine and carbamoyl phosphate: step 1/3. Reversibly catalyzes the transfer of the carbamoyl group from carbamoyl phosphate (CP) to the N(epsilon) atom of ornithine (ORN) to produce L-citrulline. This is Ornithine carbamoyltransferase from Bordetella parapertussis (strain 12822 / ATCC BAA-587 / NCTC 13253).